Consider the following 304-residue polypeptide: Glutaminase (304 aa).

Residues S63, N113, E157, N164, Y188, Y240, and V258 each coordinate substrate.

It belongs to the glutaminase family. Homotetramer.

It catalyses the reaction L-glutamine + H2O = L-glutamate + NH4(+). The polypeptide is Glutaminase (Christiangramia forsetii (strain DSM 17595 / CGMCC 1.15422 / KT0803) (Gramella forsetii)).